We begin with the raw amino-acid sequence, 422 residues long: Dihydroorotase (422 aa).

Zn(2+) is bound by residues H59 and H61. Residues 61 to 63 (HFR) and N93 contribute to the substrate site. Residues D150, H177, and H230 each contribute to the Zn(2+) site. Position 276 (N276) interacts with substrate. D303 is a Zn(2+) binding site. Residue D303 is part of the active site. H307 provides a ligand contact to substrate.

This sequence belongs to the metallo-dependent hydrolases superfamily. DHOase family. Class I DHOase subfamily. It depends on Zn(2+) as a cofactor.

It carries out the reaction (S)-dihydroorotate + H2O = N-carbamoyl-L-aspartate + H(+). It functions in the pathway pyrimidine metabolism; UMP biosynthesis via de novo pathway; (S)-dihydroorotate from bicarbonate: step 3/3. Functionally, catalyzes the reversible cyclization of carbamoyl aspartate to dihydroorotate. In Streptococcus pneumoniae serotype 4 (strain ATCC BAA-334 / TIGR4), this protein is Dihydroorotase.